A 90-amino-acid polypeptide reads, in one-letter code: QDEVGLGSCSVIFVVGNEEGEAKDGYAVGGDRCRVRCSPLGKNKDCETACRKKAGSYYGYCYLWFCYCENVSESAVVWGNPTLGPCLSDG.

A signal peptide spans 1–22 (QDEVGLGSCSVIFVVGNEEGEA). One can recognise an LCN-type CS-alpha/beta domain in the interval 23–87 (KDGYAVGGDR…WGNPTLGPCL (65 aa)). Intrachain disulfides connect Cys33-Cys86, Cys37-Cys61, Cys46-Cys66, and Cys50-Cys68.

This sequence belongs to the long (4 C-C) scorpion toxin superfamily. Sodium channel inhibitor family. Expressed by the venom gland.

The protein localises to the secreted. In terms of biological role, putative sodium channel toxin. The polypeptide is Putative sodium channel toxin Ts35 (Tityus serrulatus (Brazilian scorpion)).